Here is a 345-residue protein sequence, read N- to C-terminus: NADPH dehydrogenase (345 aa).

23–26 (SPMC) serves as a coordination point for FMN. Tyrosine 28 provides a ligand contact to substrate. 2 residues coordinate FMN: alanine 60 and glutamine 102. Substrate is bound at residue 164-167 (HGAH). FMN is bound by residues arginine 215 and 307 to 308 (GR).

The protein belongs to the NADH:flavin oxidoreductase/NADH oxidase family. NamA subfamily. As to quaternary structure, homotetramer. The cofactor is FMN.

It carries out the reaction A + NADPH + H(+) = AH2 + NADP(+). Catalyzes the reduction of the double bond of an array of alpha,beta-unsaturated aldehydes and ketones. It also reduces the nitro group of nitroester and nitroaromatic compounds. It could have a role in detoxification processes. The sequence is that of NADPH dehydrogenase from Bacillus cereus (strain AH820).